The primary structure comprises 134 residues: Cytochrome b (134 aa).

Transmembrane regions (helical) follow at residues 33 to 53 (FGSL…FLAM), 77 to 98 (WLLR…YLHV), and 113 to 133 (WNIG…GYVL). 2 residues coordinate heme b: His-83 and His-97.

It belongs to the cytochrome b family. As to quaternary structure, the cytochrome bc1 complex contains 11 subunits: 3 respiratory subunits (MT-CYB, CYC1 and UQCRFS1), 2 core proteins (UQCRC1 and UQCRC2) and 6 low-molecular weight proteins (UQCRH/QCR6, UQCRB/QCR7, UQCRQ/QCR8, UQCR10/QCR9, UQCR11/QCR10 and a cleavage product of UQCRFS1). This cytochrome bc1 complex then forms a dimer. Heme b is required as a cofactor.

The protein localises to the mitochondrion inner membrane. Its function is as follows. Component of the ubiquinol-cytochrome c reductase complex (complex III or cytochrome b-c1 complex) that is part of the mitochondrial respiratory chain. The b-c1 complex mediates electron transfer from ubiquinol to cytochrome c. Contributes to the generation of a proton gradient across the mitochondrial membrane that is then used for ATP synthesis. The polypeptide is Cytochrome b (MT-CYB) (Chiroderma salvini (Salvin's big-eyed bat)).